Consider the following 1151-residue polypeptide: SCF E3 ubiquitin ligase complex F-box protein GRR1 (1151 aa).

The span at 1–18 shows a compositional bias: basic and acidic residues; the sequence is MDQDNNNHNDSNRLHPPD. A disordered region spans residues 1-72; that stretch reads MDQDNNNHND…ATSERNASEV (72 aa). Low complexity predominate over residues 38–49; sequence NNNNNNNNNNNN. Residues 58–72 are compositionally biased toward basic and acidic residues; sequence RTRETATSERNASEV. A phosphoserine mark is found at Ser199 and Ser300. Residues 314-361 enclose the F-box domain; the sequence is VFALNMLPSEILHLILDKLNQKYDIVKFLTVSKLWAEIIVKILYYRPH. LRR repeat units follow at residues 399 to 423, 424 to 449, 450 to 475, 476 to 501, 502 to 527, 528 to 553, 554 to 582, 583 to 608, 609 to 634, 635 to 660, 661 to 685, 686 to 714, and 715 to 740; these read GDYM…TLVF, CKHI…DITG, IRDV…YVPQ, ARNV…KITA, NNNM…DITL, SPNV…RITH, NTNI…DLSG, CENI…FLGK, CSRI…HFGH, CFNI…DFAC, CTNL…GLVK, CTQM…HLSY, and CSNL…SLTA. Residues 1066 to 1080 show a composition bias toward low complexity; it reads AGANDTSNNETNNGN. Disordered regions lie at residues 1066 to 1090 and 1118 to 1151; these read AGAN…NPNF and VRNN…EDML.

As to quaternary structure, interacts with SKP1. Component of the probable SCF(GRR1) complex containing CDC53, SKP1, RBX1 and GRR1.

It localises to the membrane. The protein operates within protein modification; protein ubiquitination. In terms of biological role, substrate recognition component of a SCF (SKP1-CUL1-F-box protein) E3 ubiquitin-protein ligase complex which mediates the ubiquitination and subsequent proteasomal degradation of target proteins. Recognizes and directs ubiquitination of phosphorylated CLN1, CLN2 and GIC2. Probably constitutes the primary response element required for the generation or interpretation of the signal that induces glucose repression. This is SCF E3 ubiquitin ligase complex F-box protein GRR1 (GRR1) from Saccharomyces cerevisiae (strain ATCC 204508 / S288c) (Baker's yeast).